We begin with the raw amino-acid sequence, 428 residues long: C4-dicarboxylate transport protein (428 aa).

Helical transmembrane passes span Val-8 to Pro-28, Leu-44 to Met-64, Leu-78 to Ile-98, Gly-148 to Gly-168, Val-184 to Met-204, Leu-222 to Ala-242, Ile-307 to Met-327, and Ala-355 to Ile-375.

It belongs to the dicarboxylate/amino acid:cation symporter (DAACS) (TC 2.A.23) family.

It localises to the cell inner membrane. Responsible for the transport of dicarboxylates such as succinate, fumarate, and malate from the periplasm across the membrane. In Burkholderia pseudomallei (strain 1106a), this protein is C4-dicarboxylate transport protein.